The sequence spans 256 residues: Enolase-phosphatase E1 (256 aa).

2 residues coordinate Mg(2+): Asp-13 and Glu-15. Residues 127-128 (SS) and Lys-175 each bind substrate. Asp-202 contacts Mg(2+).

It belongs to the HAD-like hydrolase superfamily. MasA/MtnC family. Monomer. Mg(2+) is required as a cofactor.

It localises to the cytoplasm. Its subcellular location is the nucleus. It catalyses the reaction 5-methylsulfanyl-2,3-dioxopentyl phosphate + H2O = 1,2-dihydroxy-5-(methylsulfanyl)pent-1-en-3-one + phosphate. It participates in amino-acid biosynthesis; L-methionine biosynthesis via salvage pathway; L-methionine from S-methyl-5-thio-alpha-D-ribose 1-phosphate: step 3/6. Its pathway is amino-acid biosynthesis; L-methionine biosynthesis via salvage pathway; L-methionine from S-methyl-5-thio-alpha-D-ribose 1-phosphate: step 4/6. Functionally, bifunctional enzyme that catalyzes the enolization of 2,3-diketo-5-methylthiopentyl-1-phosphate (DK-MTP-1-P) into the intermediate 2-hydroxy-3-keto-5-methylthiopentenyl-1-phosphate (HK-MTPenyl-1-P), which is then dephosphorylated to form the acireductone 1,2-dihydroxy-3-keto-5-methylthiopentene (DHK-MTPene). The chain is Enolase-phosphatase E1 (utr4) from Botryotinia fuckeliana (strain B05.10) (Noble rot fungus).